The chain runs to 60 residues: Large ribosomal subunit protein uL30 (60 aa).

This sequence belongs to the universal ribosomal protein uL30 family. In terms of assembly, part of the 50S ribosomal subunit.

The chain is Large ribosomal subunit protein uL30 from Lactiplantibacillus plantarum (strain ATCC BAA-793 / NCIMB 8826 / WCFS1) (Lactobacillus plantarum).